Reading from the N-terminus, the 392-residue chain is Streptogrisin-D (392 aa).

Residues Met-1 to Ala-64 form the signal peptide. The propeptide occupies Ser-65–Leu-204. A disulfide bond links Cys-218 and Cys-238. Residues His-237, Asp-266, and Ser-348 each act as charge relay system in the active site. The cysteines at positions 342 and 369 are disulfide-linked.

This sequence belongs to the peptidase S1 family. Homodimer.

Has a primary specificity for large aliphatic or aromatic amino acids. The polypeptide is Streptogrisin-D (sprD) (Streptomyces griseus).